The primary structure comprises 318 residues: Taste receptor type 2 member 117 (318 aa).

Residues Met1–Leu16 lie on the Extracellular side of the membrane. Residues Thr17–Val37 form a helical membrane-spanning segment. The Cytoplasmic segment spans residues His38–Gln53. The helical transmembrane segment at Ile54–Val74 threads the bilayer. The Extracellular segment spans residues Ile75–Asn93. Residues Leu94–Phe114 traverse the membrane as a helical segment. Residues Leu115–Lys134 are Cytoplasmic-facing. A helical membrane pass occupies residues Val135–Asn155. Residues Leu156–His189 lie on the Extracellular side of the membrane. An N-linked (GlcNAc...) asparagine glycan is attached at Asn168. Residues Ile190–Ser210 traverse the membrane as a helical segment. Over Leu211 to Gln238 the chain is Cytoplasmic. The chain crosses the membrane as a helical span at residues Thr239–Trp259. Residues Lys260 to Leu268 are Extracellular-facing. The chain crosses the membrane as a helical span at residues Phe269–Ile289. Over Leu290 to Leu318 the chain is Cytoplasmic.

It belongs to the G-protein coupled receptor T2R family.

The protein localises to the membrane. Putative taste receptor which may play a role in the perception of bitterness. The sequence is that of Taste receptor type 2 member 117 from Rattus norvegicus (Rat).